A 403-amino-acid polypeptide reads, in one-letter code: MSTFDRIHLVVLDSVGIGAAPDANNFQNAGVPDGASDTLGHISKAVGLDVPNMAKLGLGNIPRPQALKTVAAESNPTGYATKLEEVSLGKDTMTGHWEIMGLNITEPFDTFWNGFPEEILTKIEEFSGRKVIREANKPYSGTAVIDDFGPRQMETGELIIYTSADPVLQIAAHEDIIPLEELYRICEYARSITLERPALLGRIIARPYVGEPGNFTRTSNRHDYAVSPFEDTVLNKLDQAGIDTYAVGKINDIFNGSGINHDMGHNKSNSHGIDTLIKTMGLTAFEKGFSFTNLVDFDALYGHRRDAFGYRDCLHEFDQRLPEILSAMRDNDLLLITADHGNDPTYAGTDHTREFIPLLAYSPSFKGSGVIPQGHFADISATIAENFGVERAMIGQSFLAELK.

D13, D298, H303, D339, H340, and H351 together coordinate Mn(2+).

This sequence belongs to the phosphopentomutase family. Requires Mn(2+) as cofactor.

The protein resides in the cytoplasm. It carries out the reaction 2-deoxy-alpha-D-ribose 1-phosphate = 2-deoxy-D-ribose 5-phosphate. It catalyses the reaction alpha-D-ribose 1-phosphate = D-ribose 5-phosphate. Its pathway is carbohydrate degradation; 2-deoxy-D-ribose 1-phosphate degradation; D-glyceraldehyde 3-phosphate and acetaldehyde from 2-deoxy-alpha-D-ribose 1-phosphate: step 1/2. Functionally, isomerase that catalyzes the conversion of deoxy-ribose 1-phosphate (dRib-1-P) and ribose 1-phosphate (Rib-1-P) to deoxy-ribose 5-phosphate (dRib-5-P) and ribose 5-phosphate (Rib-5-P), respectively. The protein is Phosphopentomutase of Streptococcus uberis (strain ATCC BAA-854 / 0140J).